The sequence spans 733 residues: DNA-binding protein SATB2 (733 aa).

Positions 1–47 are disordered; the sequence is MERRSESPCLRDSPDRRSGSPDVKGPPPVKVARLEQNGSPMGARGRP. The residue at position 20 (serine 20) is a Phosphoserine. Residues lysine 24 and lysine 30 each participate in a glycyl lysine isopeptide (Lys-Gly) (interchain with G-Cter in SUMO2) cross-link. Residue serine 39 is modified to Phosphoserine. Residues 57-158 form the CMP domain; the sequence is GLMIPVFCVV…VVTLKIQLQS (102 aa). Residue lysine 161 forms a Glycyl lysine isopeptide (Lys-Gly) (interchain with G-Cter in SUMO2) linkage. The CUTL domain occupies 161–234; sequence KLEDLPAEQW…WYKKYKKIKV (74 aa). A Glycyl lysine isopeptide (Lys-Gly) (interchain with G-Cter in SUMO) cross-link involves residue lysine 233. Lysine 350 participates in a covalent cross-link: Glycyl lysine isopeptide (Lys-Gly) (interchain with G-Cter in SUMO); alternate. Lysine 350 is covalently cross-linked (Glycyl lysine isopeptide (Lys-Gly) (interchain with G-Cter in SUMO2); alternate). The segment at residues 350–437 is a DNA-binding region (CUT 1); sequence KPEPTNSSVE…ERDRIYQDER (88 aa). Residues 435-473 form a disordered region; the sequence is DERERSMNPNVSMVSSASSSPSSSRTPQAKTSTPTTDLP. Low complexity predominate over residues 441 to 458; sequence MNPNVSMVSSASSSPSSS. A Phosphoserine modification is found at serine 454. Residues 459-470 show a composition bias toward polar residues; that stretch reads RTPQAKTSTPTT. A Phosphothreonine modification is found at threonine 467. The CUT 2 DNA-binding region spans 473–560; it reads PIKVDGANIN…ERDVIYEEES (88 aa). Lysine 475 is covalently cross-linked (Glycyl lysine isopeptide (Lys-Gly) (interchain with G-Cter in SUMO2)). Low complexity predominate over residues 580 to 593; the sequence is QVLHRQQSQPAKES. Disordered stretches follow at residues 580-617 and 694-733; these read QVLH…KPRS and LLTE…IDQR. At serine 594 the chain carries Phosphoserine. Residues 615 to 674 constitute a DNA-binding region (homeobox); that stretch reads PRSRTKISLEALGILQSFIHDVGLYPDQEAIHTLSAQLDLPKHTIIKFFQNQRYHVKHHG. Over residues 694–708 the composition is skewed to acidic residues; that stretch reads LLTESEENDSEEGSE. Residues 709–733 are compositionally biased toward basic and acidic residues; it reads EMYKVEAEEENADKSKAAPAEIDQR. Lysine 724 is covalently cross-linked (Glycyl lysine isopeptide (Lys-Gly) (interchain with G-Cter in SUMO2)).

The protein belongs to the CUT homeobox family. As to quaternary structure, interacts with ATF4 and RUNX2; resulting in enhanced DNA binding and transactivation by these transcription factors. Interacts with PIAS1. Post-translationally, sumoylated by PIAS1. Sumoylation promotes nuclear localization, but represses transcription factor activity. As to expression, high expression in adult brain, moderate expression in fetal brain, and weak expression in adult liver, kidney, and spinal cord and in select brain regions, including amygdala, corpus callosum, caudate nucleus, and hippocampus.

It localises to the nucleus matrix. Binds to DNA, at nuclear matrix- or scaffold-associated regions. Thought to recognize the sugar-phosphate structure of double-stranded DNA. Transcription factor controlling nuclear gene expression, by binding to matrix attachment regions (MARs) of DNA and inducing a local chromatin-loop remodeling. Acts as a docking site for several chromatin remodeling enzymes and also by recruiting corepressors (HDACs) or coactivators (HATs) directly to promoters and enhancers. Required for the initiation of the upper-layer neurons (UL1) specific genetic program and for the inactivation of deep-layer neurons (DL) and UL2 specific genes, probably by modulating BCL11B expression. Repressor of Ctip2 and regulatory determinant of corticocortical connections in the developing cerebral cortex. May play an important role in palate formation. Acts as a molecular node in a transcriptional network regulating skeletal development and osteoblast differentiation. This is DNA-binding protein SATB2 (SATB2) from Homo sapiens (Human).